We begin with the raw amino-acid sequence, 79 residues long: Serine rich endogenous peptide 2 (79 aa).

The signal sequence occupies residues 1–19 (MANNLGLVILLLVIVLVSC). Positions 25–79 (CALASPQKSRPSSEWRRKLIPVRSSRSPRSPSFAPKKPPPPPPSPPLSPSSPPSN) are disordered. Positions 45–57 (PVRSSRSPRSPSF) match the SCOOP motif motif. Low complexity predominate over residues 45 to 59 (PVRSSRSPRSPSFAP). Residues 49-51 (SRS) carry the SxS motif essential for MIK2 binding motif. Positions 60-79 (KKPPPPPPSPPLSPSSPPSN) are enriched in pro residues.

The protein belongs to the serine rich endogenous peptide (SCOOP) phytocytokine family. As to quaternary structure, interacts with MIK2 (via extracellular leucine-rich repeat domain); this interaction triggers the formation of complex between MIK2 and the BAK1/SERK3 and SERK4 coreceptors, and subsequent BAK1 activation by phosphorylation.

The protein resides in the cell membrane. The protein localises to the secreted. It is found in the extracellular space. It localises to the apoplast. Its function is as follows. Brassicaceae-specific phytocytokine (plant endogenous peptide released into the apoplast) perceived by MIK2 in a BAK1/SERK3 and SERK4 coreceptors-dependent manner, that modulates various physiological and antimicrobial processes including growth prevention and reactive oxygen species (ROS) response regulation. This Arabidopsis thaliana (Mouse-ear cress) protein is Serine rich endogenous peptide 2.